The sequence spans 472 residues: ATP-dependent rRNA helicase rrp3 (472 aa).

A disordered region spans residues 1 to 52; sequence MRDVKKRKIAHEAPEHGSDTESTSSHKSVAQQDDPLETQDEATATESRPAPK. The span at 10–19 shows a compositional bias: basic and acidic residues; that stretch reads AHEAPEHGSD. The segment covering 20 to 31 has biased composition (polar residues); that stretch reads TESTSSHKSVAQ. The Q motif motif lies at 52-80; that stretch reads KSFKDLGIIDQLCEACETMGYKAPTPIQA. A Helicase ATP-binding domain is found at 83 to 254; it reads IPLALQGRDL…RASLSNPLRV (172 aa). Residue 96 to 103 coordinates ATP; that stretch reads AETGSGKT. A DEAD box motif is present at residues 202 to 205; that stretch reads DEAD. One can recognise a Helicase C-terminal domain in the interval 282–426; that stretch reads YLVYLLNEFV…EYELEKDEVM (145 aa). The segment at 444–472 is disordered; sequence KNFDEKRGTKAKKFGKGKRSRDEMDQEEG. Over residues 452-462 the composition is skewed to basic residues; the sequence is TKAKKFGKGKR.

This sequence belongs to the DEAD box helicase family. DDX47/RRP3 subfamily. In terms of assembly, interacts with the SSU processome.

Its subcellular location is the nucleus. It catalyses the reaction ATP + H2O = ADP + phosphate + H(+). In terms of biological role, ATP-dependent rRNA helicase required for pre-ribosomal RNA processing. Involved in the maturation of the 35S-pre-rRNA and to its cleavage to mature 18S rRNA. This Aspergillus fumigatus (strain ATCC MYA-4609 / CBS 101355 / FGSC A1100 / Af293) (Neosartorya fumigata) protein is ATP-dependent rRNA helicase rrp3.